The primary structure comprises 364 residues: Aminomethyltransferase (364 aa).

Belongs to the GcvT family. As to quaternary structure, the glycine cleavage system is composed of four proteins: P, T, L and H.

The catalysed reaction is N(6)-[(R)-S(8)-aminomethyldihydrolipoyl]-L-lysyl-[protein] + (6S)-5,6,7,8-tetrahydrofolate = N(6)-[(R)-dihydrolipoyl]-L-lysyl-[protein] + (6R)-5,10-methylene-5,6,7,8-tetrahydrofolate + NH4(+). The glycine cleavage system catalyzes the degradation of glycine. The polypeptide is Aminomethyltransferase (Shewanella denitrificans (strain OS217 / ATCC BAA-1090 / DSM 15013)).